We begin with the raw amino-acid sequence, 3312 residues long: Cadherin EGF LAG seven-pass G-type receptor 3 (3312 aa).

The first 32 residues, Met1–Glu32, serve as a signal peptide directing secretion. The Extracellular portion of the chain corresponds to Glu33–Ala2540. Disordered stretches follow at residues Gly90–Glu112, Gly143–Val199, and Gly212–Lys306. Low complexity predominate over residues Ser159–Ser173. Residues Arg290–Pro299 are compositionally biased toward pro residues. Cadherin domains lie at Pro326–Phe433, Glu434–Phe545, Ser546–Phe651, Val652–Phe756, Thr757–Phe858, Gln859–Phe961, Val962–Phe1067, Pro1068–Leu1169, and Asn1170–Ile1265. Residue Asn632 is glycosylated (N-linked (GlcNAc...) asparagine). Residue Asn847 is glycosylated (N-linked (GlcNAc...) asparagine). 4 N-linked (GlcNAc...) asparagine glycosylation sites follow: Asn1182, Asn1222, Asn1317, and Asn1327. The region spanning Asp1375–Glu1433 is the EGF-like 1; calcium-binding domain. Intrachain disulfides connect Cys1379-Cys1390, Cys1384-Cys1421, Cys1423-Cys1432, Cys1439-Cys1450, Cys1444-Cys1459, Cys1461-Cys1470, Cys1479-Cys1490, Cys1484-Cys1500, and Cys1502-Cys1513. In terms of domain architecture, EGF-like 2; calcium-binding spans Glu1435–Glu1471. An EGF-like 3; calcium-binding domain is found at Glu1475–Glu1514. The Laminin G-like 1 domain occupies Val1515–Cys1719. N-linked (GlcNAc...) asparagine glycosylation is found at Asn1649 and Asn1713. Disulfide bonds link Cys1693/Cys1719, Cys1726/Cys1737, Cys1731/Cys1746, and Cys1748/Cys1757. An EGF-like 4; calcium-binding domain is found at Lys1722–Gln1758. Residues Pro1764–Cys1944 form the Laminin G-like 2 domain. An N-linked (GlcNAc...) asparagine glycan is attached at Asn1770. Disulfide bonds link Cys1915-Cys1944, Cys1950-Cys1961, Cys1955-Cys1970, Cys1972-Cys1981, Cys1985-Cys1996, Cys1990-Cys2008, Cys2010-Cys2019, Cys2027-Cys2040, and Cys2042-Cys2052. The EGF-like 5; calcium-binding domain maps to Val1946–Val1982. A (3R)-3-hydroxyaspartate modification is found at Asp1963. An EGF-like 6; calcium-binding domain is found at Asp1983–Glu2020. Residues His2021–Asn2053 enclose the EGF-like 7; calcium-binding domain. N-linked (GlcNAc...) asparagine glycosylation occurs at Asn2053. The 36-residue stretch at Thr2055–Ala2090 folds into the EGF-like 8; calcium-binding domain. Cystine bridges form between Cys2059-Cys2074, Cys2061-Cys2077, Cys2079-Cys2089, Cys2098-Cys2107, and Cys2110-Cys2122. The region spanning Cys2077–Val2124 is the Laminin EGF-like domain. Tyr2126 bears the Phosphotyrosine mark. N-linked (GlcNAc...) asparagine glycans are attached at residues Asn2177, Asn2196, Asn2386, Asn2474, and Asn2506. Residues Thr2361–Pro2399 are disordered. The region spanning Gln2368–Glu2530 is the GAIN-B domain. The span at Thr2380 to Ser2391 shows a compositional bias: low complexity. 2 disulfides stabilise this stretch: Cys2480–Cys2512 and Cys2500–Cys2514. The tract at residues Cys2480 to Glu2530 is GPS. A helical membrane pass occupies residues Val2541–Leu2561. Residues Leu2562 to Arg2572 are Cytoplasmic-facing. The chain crosses the membrane as a helical span at residues Gly2573–Ile2593. Topologically, residues His2594 to Val2601 are extracellular. The chain crosses the membrane as a helical span at residues Cys2602–Val2622. Residues Gln2623–Arg2643 lie on the Cytoplasmic side of the membrane. A helical transmembrane segment spans residues Phe2644–Asp2664. Over Pro2665–Pro2681 the chain is Extracellular. The helical transmembrane segment at Leu2682–Leu2702 threads the bilayer. The Cytoplasmic segment spans residues Leu2703–Arg2725. The chain crosses the membrane as a helical span at residues Ser2726–Asn2746. Topologically, residues His2747–His2753 are extracellular. The chain crosses the membrane as a helical span at residues Tyr2754–Leu2774. Over Asn2775–Ser3312 the chain is Cytoplasmic. Disordered regions lie at residues Ala2888–Leu2927 and Thr2978–Gln3006. Acidic residues predominate over residues Ala2890–Leu2900. A Phosphotyrosine modification is found at Tyr3051. Disordered regions lie at residues Glu3086–Leu3243 and Ser3256–Ser3312. Ser3097 carries the post-translational modification Phosphoserine. Low complexity-rich tracts occupy residues Ser3175 to Ser3198, Ser3256 to Ser3265, and Thr3272 to Ser3281. Over residues Thr3287–Ser3300 the composition is skewed to polar residues.

It belongs to the G-protein coupled receptor 2 family. LN-TM7 subfamily.

Its subcellular location is the cell membrane. Receptor that may have an important role in cell/cell signaling during nervous system formation. This is Cadherin EGF LAG seven-pass G-type receptor 3 (CELSR3) from Homo sapiens (Human).